A 284-amino-acid polypeptide reads, in one-letter code: D-tagatose-1,6-bisphosphate aldolase subunit GatY (284 aa).

Asp82 acts as the Proton donor in catalysis. Zn(2+)-binding residues include His83 and His180. Gly181 is a binding site for dihydroxyacetone phosphate. His208 is a Zn(2+) binding site. Dihydroxyacetone phosphate is bound by residues 209 to 211 and 230 to 233; these read GAS and NVAT.

It belongs to the class II fructose-bisphosphate aldolase family. TagBP aldolase GatY subfamily. Forms a complex with GatZ. The cofactor is Zn(2+).

It carries out the reaction D-tagatofuranose 1,6-bisphosphate = D-glyceraldehyde 3-phosphate + dihydroxyacetone phosphate. The protein operates within carbohydrate metabolism; D-tagatose 6-phosphate degradation; D-glyceraldehyde 3-phosphate and glycerone phosphate from D-tagatose 6-phosphate: step 2/2. Functionally, catalytic subunit of the tagatose-1,6-bisphosphate aldolase GatYZ, which catalyzes the reversible aldol condensation of dihydroxyacetone phosphate (DHAP or glycerone-phosphate) with glyceraldehyde 3-phosphate (G3P) to produce tagatose 1,6-bisphosphate (TBP). Requires GatZ subunit for full activity and stability. Is involved in the catabolism of galactitol. The protein is D-tagatose-1,6-bisphosphate aldolase subunit GatY of Escherichia coli O17:K52:H18 (strain UMN026 / ExPEC).